A 567-amino-acid chain; its full sequence is MTFIGWCQIALFGAVVVALVKPLGWYMTRVFAGEWTPLTPVLRPVETMLYRAAGVDPKQEQHWLTFTLAMLLFHIGGFAIIYAVLRLQALLPFNPAEQGAVAPDLAFNTAISFLTNTNWQNYGGESTLSYLSQMLALTHQNFLSAATGIVLAMALIRGFSRASVRTIGNFWVDITRCTLYVLLPICIPYALFLVWQGMPQTLGSYVDATTLEGAKQTIAVGPVASQVAIKMLGTNGGGFFNANAAHPFENPTALSNFVQMLSIFVLGAALTNVFGRMIGNQRQGWAILGVMGVLFVVGIAVAYWAEASGTATLDALGITGGNMEGKEVRFGIVASALFAVVTTAASCGAVNAMHDSFTALGGMIPLINMQLGEIIVGGVGAGLYGMLLFVVLAIFVAGLMVGRTPEYVGKKIEAREVKMAMLAILVLPLMYLGWTAIAVVLPSAVASMGNAGPHGFSEVLYAFTSATANNGSAFGGLTGNTFFYNLTLATAMFVGRFMMIVPTMAIAGSLAGKKLVPPSAGTLPTTGGLFVGLVVGVILIIGGLTFFPALALGPIVEQVSMSAKTLF.

Helical transmembrane passes span 3-23, 64-84, 136-156, 179-199, 254-274, 285-305, 330-350, 357-376, 421-441, 473-495, and 527-547; these read FIGW…VKPL, LTFT…IYAV, ALTH…MALI, LYVL…QGMP, LSNF…TNVF, WAIL…AYWA, FGIV…CGAV, FTAL…EIIV, MLAI…AVVL, AFGG…MFVG, and GGLF…LTFF.

This sequence belongs to the KdpA family. As to quaternary structure, the system is composed of three essential subunits: KdpA, KdpB and KdpC.

It is found in the cell inner membrane. Its function is as follows. Part of the high-affinity ATP-driven potassium transport (or Kdp) system, which catalyzes the hydrolysis of ATP coupled with the electrogenic transport of potassium into the cytoplasm. This subunit binds the periplasmic potassium ions and delivers the ions to the membrane domain of KdpB through an intramembrane tunnel. The protein is Potassium-transporting ATPase potassium-binding subunit of Rhodopseudomonas palustris (strain ATCC BAA-98 / CGA009).